The primary structure comprises 802 residues: Phenylalanine--tRNA ligase beta subunit (802 aa).

Residues 38 to 148 form the tRNA-binding domain; it reads SKNFERVIVG…SEVPVGTDIS (111 aa). The B5 domain occupies 403-478; the sequence is VIQKKIFVLK…RVFGYHNIPA (76 aa). Mg(2+) contacts are provided by Asp456, Asp462, and Asp466. The region spanning 703-796 is the FDX-ACB domain; sequence SLYPRCSRDI…LQEKFNAILR (94 aa).

Belongs to the phenylalanyl-tRNA synthetase beta subunit family. Type 1 subfamily. Tetramer of two alpha and two beta subunits. It depends on Mg(2+) as a cofactor.

Its subcellular location is the cytoplasm. It carries out the reaction tRNA(Phe) + L-phenylalanine + ATP = L-phenylalanyl-tRNA(Phe) + AMP + diphosphate + H(+). The protein is Phenylalanine--tRNA ligase beta subunit of Buchnera aphidicola subsp. Baizongia pistaciae (strain Bp).